A 726-amino-acid polypeptide reads, in one-letter code: Catalase-peroxidase (726 aa).

Residues 98-226 (WHSAGTYRMQ…LAAVHMGLIY (129 aa)) constitute a cross-link (tryptophyl-tyrosyl-methioninium (Trp-Tyr) (with M-252)). The Proton acceptor role is filled by His99. Residues 226–252 (YVNPEGVNGQPDPARTAQHVRETFARM) constitute a cross-link (tryptophyl-tyrosyl-methioninium (Tyr-Met) (with W-98)). His267 contributes to the heme b binding site.

The protein belongs to the peroxidase family. Peroxidase/catalase subfamily. Homodimer or homotetramer. The cofactor is heme b. In terms of processing, formation of the three residue Trp-Tyr-Met cross-link is important for the catalase, but not the peroxidase activity of the enzyme.

The enzyme catalyses H2O2 + AH2 = A + 2 H2O. The catalysed reaction is 2 H2O2 = O2 + 2 H2O. Its function is as follows. Bifunctional enzyme with both catalase and broad-spectrum peroxidase activity. The protein is Catalase-peroxidase of Roseobacter denitrificans (strain ATCC 33942 / OCh 114) (Erythrobacter sp. (strain OCh 114)).